Reading from the N-terminus, the 253-residue chain is Imidazole glycerol phosphate synthase subunit HisF (253 aa).

Residues aspartate 11 and aspartate 130 contribute to the active site.

It belongs to the HisA/HisF family. In terms of assembly, heterodimer of HisH and HisF.

It localises to the cytoplasm. The enzyme catalyses 5-[(5-phospho-1-deoxy-D-ribulos-1-ylimino)methylamino]-1-(5-phospho-beta-D-ribosyl)imidazole-4-carboxamide + L-glutamine = D-erythro-1-(imidazol-4-yl)glycerol 3-phosphate + 5-amino-1-(5-phospho-beta-D-ribosyl)imidazole-4-carboxamide + L-glutamate + H(+). It functions in the pathway amino-acid biosynthesis; L-histidine biosynthesis; L-histidine from 5-phospho-alpha-D-ribose 1-diphosphate: step 5/9. IGPS catalyzes the conversion of PRFAR and glutamine to IGP, AICAR and glutamate. The HisF subunit catalyzes the cyclization activity that produces IGP and AICAR from PRFAR using the ammonia provided by the HisH subunit. In Geobacter sulfurreducens (strain ATCC 51573 / DSM 12127 / PCA), this protein is Imidazole glycerol phosphate synthase subunit HisF.